Consider the following 1250-residue polypeptide: Probable autotransporter YfaL (1250 aa).

The N-terminal stretch at 1 to 28 (MRIIFLRKEYLSLLPSMIASLFSANGVA) is a signal peptide. The segment at 914–951 (RSQEVTPPSPPDPDPTPDPDPTPDPDPTPDPEPTPAYQ) is disordered. The stretch at 919–920 (TP) is repeat 1. Positions 919-948 (TPPSPPDPDPTPDPDPTPDPDPTPDPEPTP) are 15 X 2 AA approximate tandem repeats of [DTPE]-P. Residues 921–922 (PS) form a 2; approximate repeat. Repeat 3 spans residues 923–924 (PP). A 4; approximate repeat occupies 925–926 (DP). 11 consecutive repeat copies span residues 927–928 (DP), 929–930 (TP), 931–932 (DP), 933–934 (DP), 935–936 (TP), 937–938 (DP), 939–940 (DP), 941–942 (TP), 943–944 (DP), 945–946 (EP), and 947–948 (TP). A compositionally biased stretch (acidic residues) spans 928 to 942 (PTPDPDPTPDPDPTP). One can recognise an Autotransporter domain in the interval 980 to 1250 (AGGDGQTLNL…AGFLSMTVKW (271 aa)).

In terms of processing, an approximately 170 kDa protein is detected in the outer membrane, while a C-terminal 55 kDa fragment is detected in whole cells. The full-length putative autotransporter may be cleaved to release the mature protein from the outer membrane; Pefabloc SC, a Ser-Thr protease inhibitor prevents the appearance of the 55 kDa C--terminal fragment.

The protein resides in the periplasm. The protein localises to the secreted. Its subcellular location is the cell surface. It localises to the cell outer membrane. Its function is as follows. Probably an autotransporter. Upon overexpression shows increased adherence to polyvinyl chloride (PVC) plates, increased mature biofilm formation. This chain is Probable autotransporter YfaL (yfaL), found in Escherichia coli (strain K12).